Consider the following 2528-residue polypeptide: Reducing polyketide synthase PKS1 (2528 aa).

The Ketosynthase family 3 (KS3) domain maps to 11 to 436; sequence ITPIAVVGMS…GANVHAILES (426 aa). Catalysis depends on for beta-ketoacyl synthase activity residues Cys-186, His-321, and His-359. A malonyl-CoA:ACP transacylase (MAT) region spans residues 573-868; sequence FVFTGQGAQW…LGGPISQVID (296 aa). An N-terminal hotdog fold region spans residues 954 to 1092; the sequence is LDLIGVFDVH…GLISVLKSSK (139 aa). Residues 954–1278 enclose the PKS/mFAS DH domain; it reads LDLIGVFDVH…LVALDRPNSS (325 aa). The tract at residues 956 to 1277 is dehydratase (DH) domain; that stretch reads LIGVFDVHSS…TLVALDRPNS (322 aa). His-986 functions as the Proton acceptor; for dehydratase activity in the catalytic mechanism. The segment at 1122–1278 is C-terminal hotdog fold; that stretch reads KTEWDVKDMY…LVALDRPNSS (157 aa). Asp-1187 acts as the Proton donor; for dehydratase activity in catalysis. The interval 1827-2139 is enoyl reductase (ER) domain; the sequence is GLLDSLHFTV…TGRHMGKMVA (313 aa). Residues 2164–2341 are ketoreductase (KR) domain; it reads ASYLLVGGVG…ATVIDIGAVH (178 aa). Positions 2442 to 2519 constitute a Carrier domain; that stretch reads SAVTIVLSAL…ALAVKIAARS (78 aa). Ser-2479 bears the O-(pantetheine 4'-phosphoryl)serine mark.

It functions in the pathway mycotoxin biosynthesis. Functionally, reducing polyketide synthase (PKS); part of the Tox1A locus, one of the 2 loci that mediate the biosynthesis of T-toxin, a family of linear polyketides 37 to 45 carbons in length, of which the major component is 41 carbons, and which leads to high virulence to maize. One of the PKSs (PKS1 or PKS2) could synthesize a precursor, used subsequently by the other PKS as starter unit, to add additional carbons. Variability in the length of the final carbon backbone C35-47 could be achieved by varying the number of condensation cycles, or use of different starter or extender units or might be due to decarboxylation of the penultimate product, catalyzed by DEC1. Additional proteins are required for the biosynthesis of T-toxin, including oxidoreductases RED1, RED2, RED3, LAM1 and OXI1, as well as esterase TOX9. This Cochliobolus heterostrophus (strain C4 / ATCC 48331 / race T) (Southern corn leaf blight fungus) protein is Reducing polyketide synthase PKS1.